The chain runs to 504 residues: MALSISIYFLLIFLSHFPSSHAEPFIGVNYGQVADNLPPPSETVKLLQSTSIQKVRLYGADPAIIKALAGTGVGIVIGAANGDVPSLASDPNAATQWINSNVLPFYPASKIMLITVGNEILMSNDPNLVNQLLPAMQNVQKALEAVSLGGKIKVSTVNSMTVLGSSDPPSSGSFAAGYQTGLKGILQFLSDTGSPFAINPYPFFAYQSDPRPETLAFCLFEPNAGRVDSKTGIKYTNMFDAQVDAVHSALKSMGFEKVEIVVAETGWASRGDANEVGASVDNAKAYNGNLIAHLRSMVGTPLMPGKPVDTYIFALYDENLKPGPSSERAFGLFKTDLSMVYDVGLAKSSSSSQTPSGKVTSSGWCVPKKGATNEELQASLDWACGHGIDCGAIQPGGACFEPNNVVSHAAYAMNMYFQKSPKQPTDCDFSKTATVTSQNPSYNNCVYPGGGGGGGGGGGGSKAVMNKYVSSDKVEKKNGATEPKVSSSLSFLLIFLSLIFHVYM.

A signal peptide spans 1-22 (MALSISIYFLLIFLSHFPSSHA). The Proton donor role is filled by glutamate 119. The Nucleophile role is filled by glutamate 264. An intrachain disulfide couples cysteine 365 to cysteine 427.

The protein belongs to the glycosyl hydrolase 17 family. Post-translationally, contains two additional disulfide bonds.

Its subcellular location is the secreted. The protein resides in the cell wall. It catalyses the reaction Hydrolysis of (1-&gt;3)-beta-D-glucosidic linkages in (1-&gt;3)-beta-D-glucans.. The polypeptide is Glucan endo-1,3-beta-glucosidase 7 (Arabidopsis thaliana (Mouse-ear cress)).